Here is a 267-residue protein sequence, read N- to C-terminus: uncharacterized protein (267 aa).

2 positions are modified to phosphoserine: Ser-210 and Ser-224.

As to expression, testis. Down-regulated in men with spermatocyte arrest.

Essential for normal spermatogenesis and male fertility. This is an uncharacterized protein from Homo sapiens (Human).